A 112-amino-acid polypeptide reads, in one-letter code: Type III inner-rod protein PscI (112 aa).

Belongs to the YscI/HrpB family. As to quaternary structure, homomultimer (through its C-terminal region).

Component of the type III secretion (T3S) injectisome that translocates effector toxins into host cells, facilitating the establishment and dissemination of infection. Polymerizes into flexible and regularly twisted fibrils and plays an essential role in needle assembly. The sequence is that of Type III inner-rod protein PscI (pscI) from Pseudomonas aeruginosa (strain ATCC 15692 / DSM 22644 / CIP 104116 / JCM 14847 / LMG 12228 / 1C / PRS 101 / PAO1).